A 337-amino-acid chain; its full sequence is Holliday junction branch migration complex subunit RuvB (337 aa).

Residues 1–179 (MTHQVSVLHQ…FSFSGRVSYY (179 aa)) form a large ATPase domain (RuvB-L) region. ATP is bound by residues leucine 18, arginine 19, glycine 60, lysine 63, threonine 64, serine 65, 126–128 (EDY), arginine 169, tyrosine 179, and arginine 216. Threonine 64 is a Mg(2+) binding site. The interval 180–250 (SDEDLATILK…VAEKALSMLL (71 aa)) is small ATPAse domain (RuvB-S). The interval 253–337 (DWGLNEIDIK…DNLQILGEEK (85 aa)) is head domain (RuvB-H). DNA contacts are provided by lysine 308 and arginine 313.

This sequence belongs to the RuvB family. Homohexamer. Forms an RuvA(8)-RuvB(12)-Holliday junction (HJ) complex. HJ DNA is sandwiched between 2 RuvA tetramers; dsDNA enters through RuvA and exits via RuvB. An RuvB hexamer assembles on each DNA strand where it exits the tetramer. Each RuvB hexamer is contacted by two RuvA subunits (via domain III) on 2 adjacent RuvB subunits; this complex drives branch migration. In the full resolvosome a probable DNA-RuvA(4)-RuvB(12)-RuvC(2) complex forms which resolves the HJ.

The protein localises to the cytoplasm. It carries out the reaction ATP + H2O = ADP + phosphate + H(+). Functionally, the RuvA-RuvB-RuvC complex processes Holliday junction (HJ) DNA during genetic recombination and DNA repair, while the RuvA-RuvB complex plays an important role in the rescue of blocked DNA replication forks via replication fork reversal (RFR). RuvA specifically binds to HJ cruciform DNA, conferring on it an open structure. The RuvB hexamer acts as an ATP-dependent pump, pulling dsDNA into and through the RuvAB complex. RuvB forms 2 homohexamers on either side of HJ DNA bound by 1 or 2 RuvA tetramers; 4 subunits per hexamer contact DNA at a time. Coordinated motions by a converter formed by DNA-disengaged RuvB subunits stimulates ATP hydrolysis and nucleotide exchange. Immobilization of the converter enables RuvB to convert the ATP-contained energy into a lever motion, pulling 2 nucleotides of DNA out of the RuvA tetramer per ATP hydrolyzed, thus driving DNA branch migration. The RuvB motors rotate together with the DNA substrate, which together with the progressing nucleotide cycle form the mechanistic basis for DNA recombination by continuous HJ branch migration. Branch migration allows RuvC to scan DNA until it finds its consensus sequence, where it cleaves and resolves cruciform DNA. In Chlamydia felis (strain Fe/C-56) (Chlamydophila felis), this protein is Holliday junction branch migration complex subunit RuvB.